The following is a 283-amino-acid chain: V-set domain containing T-cell activation inhibitor 1 (283 aa).

Positions 1-24 (MASLGQIIFWSIINIIIILAGAIA) are cleaved as a signal peptide. Ig-like V-type domains follow at residues 35–144 (HFIT…ANLE) and 153–241 (PEIN…IKVT). 2 disulfide bridges follow: cysteine 56–cysteine 130 and cysteine 168–cysteine 225. The N-linked (GlcNAc...) asparagine glycan is linked to asparagine 216. Glycine 257 carries GPI-anchor amidated glycine lipidation. Residues 258–283 (PSPCVFSSAFVAGWALLSLSCCLMLR) constitute a propeptide, removed in mature form.

This sequence belongs to the immunoglobulin superfamily. BTN/MOG family. N-glycosylated. In terms of tissue distribution, expressed on the surface of professional antigen-presenting cells (at protein level). Widely expressed, including in kidney, liver, lung, pancreas, placenta, prostate, spleen, testis and thymus.

The protein localises to the cell membrane. Functionally, negatively regulates T-cell-mediated immune response by inhibiting T-cell activation, proliferation, cytokine production and development of cytotoxicity. When expressed on the cell surface of tumor macrophages, plays an important role, together with regulatory T-cells (Treg), in the suppression of tumor-associated antigen-specific T-cell immunity. Involved in promoting epithelial cell transformation. The chain is V-set domain containing T-cell activation inhibitor 1 from Mus musculus (Mouse).